We begin with the raw amino-acid sequence, 387 residues long: F420-dependent formate dehydrogenase 1 subunit beta (387 aa).

2 consecutive 4Fe-4S ferredoxin-type domains span residues 275 to 298 and 326 to 355; these read TIEE…VCPV and VRMS…ARIF. [4Fe-4S] cluster is bound by residues Cys286, Cys289, Cys292, Cys296, Cys335, Cys338, Cys341, and Cys345. The interval 366–387 is disordered; that stretch reads LGYRPGVDDEAPPALGGSCPTQ.

This sequence belongs to the FrhB family. In terms of assembly, dimer of an alpha (FdhA1) and a beta (FdhB1) subunit. Requires [4Fe-4S] cluster as cofactor. FAD is required as a cofactor. Zn(2+) serves as cofactor.

It carries out the reaction oxidized coenzyme F420-(gamma-L-Glu)(n) + formate + 2 H(+) = reduced coenzyme F420-(gamma-L-Glu)(n) + CO2. In terms of biological role, catalyzes the oxidation of formate to carbon dioxide, with coenzyme F420 as the electron acceptor. In vitro can also use methyl viologen as electron acceptor. The sequence is that of F420-dependent formate dehydrogenase 1 subunit beta from Methanococcus maripaludis (strain DSM 14266 / JCM 13030 / NBRC 101832 / S2 / LL).